The primary structure comprises 380 residues: Putative F-box/kelch-repeat protein At2g44030 (380 aa).

Residues 16 to 66 (PKSFLSLPYDVVFNCLSRVSRTHDPILSLVSKSFRSLLALPDLEAERFRIL) form the F-box domain. Kelch repeat units follow at residues 123–170 (EIYL…VIDG) and 172–219 (INVY…ALIK).

This Arabidopsis thaliana (Mouse-ear cress) protein is Putative F-box/kelch-repeat protein At2g44030.